A 367-amino-acid chain; its full sequence is Cyclin-dependent kinase 5 activator 2 (367 aa).

Residues 1-11 (MGTVLSLSPAS) are compositionally biased toward polar residues. 4 disordered regions span residues 1 to 56 (MGTV…RLKR), 72 to 98 (ASAKKKKGSKKVTPKPASTGPDPLVQQ), 131 to 175 (AAAT…GSPR), and 329 to 367 (GEAAASGGGPPSGGAPAASSAARDSCAAGTKHWTMNLDR). Gly-2 carries N-myristoyl glycine lipidation. Positions 74–84 (AKKKKGSKKVT) are enriched in basic residues. Position 84 is a phosphothreonine (Thr-84). Positions 131–148 (AAATCEPPSGGSAAAQPP) are enriched in low complexity. Residues 154–171 (KPPPPPPPAPQVAPPVPG) show a composition bias toward pro residues. Residues 342-357 (GAPAASSAARDSCAAG) are compositionally biased toward low complexity.

It belongs to the cyclin-dependent kinase 5 activator family. In terms of assembly, heterodimer of a catalytic subunit and a regulatory subunit. In terms of processing, myristoylated. The Gly-2-Ala mutant is absent of the cell periphery, suggesting that a proper myristoylation signal is essential for the proper distribution of CDK5R2 (p39). As to expression, brain and neuron specific.

It is found in the cell membrane. Its function is as follows. Activator of CDK5/TPKII. The sequence is that of Cyclin-dependent kinase 5 activator 2 (CDK5R2) from Homo sapiens (Human).